The following is a 141-amino-acid chain: Hemoglobin subunit alpha (141 aa).

Positions 1–141 (VLSPGDKSNI…VSTVLTSKYR (141 aa)) constitute a Globin domain. Serine 3 carries the phosphoserine modification. 2 positions are modified to N6-succinyllysine: lysine 7 and lysine 11. Residue lysine 16 is modified to N6-acetyllysine; alternate. Lysine 16 carries the post-translational modification N6-succinyllysine; alternate. Phosphotyrosine is present on tyrosine 24. The residue at position 35 (serine 35) is a Phosphoserine. Lysine 40 carries the N6-succinyllysine modification. Residue serine 49 is modified to Phosphoserine. O2 is bound at residue histidine 58. Heme b is bound at residue histidine 87. Serine 102 carries the post-translational modification Phosphoserine. At threonine 108 the chain carries Phosphothreonine. Serine 124 is subject to Phosphoserine. A phosphothreonine mark is found at threonine 134 and threonine 137. The residue at position 138 (serine 138) is a Phosphoserine.

This sequence belongs to the globin family. As to quaternary structure, heterotetramer of two alpha chains and two beta chains. Red blood cells.

Functionally, involved in oxygen transport from the lung to the various peripheral tissues. In terms of biological role, hemopressin acts as an antagonist peptide of the cannabinoid receptor CNR1. Hemopressin-binding efficiently blocks cannabinoid receptor CNR1 and subsequent signaling. The protein is Hemoglobin subunit alpha (HBA) of Tupaia glis (Common tree shrew).